Reading from the N-terminus, the 245-residue chain is Enolase-phosphatase E1 (245 aa).

It belongs to the HAD-like hydrolase superfamily. MasA/MtnC family. In terms of assembly, monomer. Mg(2+) serves as cofactor.

The enzyme catalyses 5-methylsulfanyl-2,3-dioxopentyl phosphate + H2O = 1,2-dihydroxy-5-(methylsulfanyl)pent-1-en-3-one + phosphate. The protein operates within amino-acid biosynthesis; L-methionine biosynthesis via salvage pathway; L-methionine from S-methyl-5-thio-alpha-D-ribose 1-phosphate: step 3/6. Its pathway is amino-acid biosynthesis; L-methionine biosynthesis via salvage pathway; L-methionine from S-methyl-5-thio-alpha-D-ribose 1-phosphate: step 4/6. Bifunctional enzyme that catalyzes the enolization of 2,3-diketo-5-methylthiopentyl-1-phosphate (DK-MTP-1-P) into the intermediate 2-hydroxy-3-keto-5-methylthiopentenyl-1-phosphate (HK-MTPenyl-1-P), which is then dephosphorylated to form the acireductone 1,2-dihydroxy-3-keto-5-methylthiopentene (DHK-MTPene). The sequence is that of Enolase-phosphatase E1 from Parasynechococcus marenigrum (strain WH8102).